A 490-amino-acid chain; its full sequence is GTPase Der (490 aa).

EngA-type G domains are found at residues 3–166 (PVIA…PRDE) and 196–369 (IKIA…KSAV). GTP contacts are provided by residues 9–16 (GRPNVGKS), 56–60 (DTGGI), 118–121 (NKID), 202–209 (GRPNVGKS), 249–253 (DTAGV), and 314–317 (NKWD). The 85-residue stretch at 370 to 454 (TRWPTSRLTQ…PIRIEFKGGE (85 aa)) folds into the KH-like domain. The interval 452–490 (GGENPYEGNKNTLTDRQVNKKRRMMSHHKKADKKRRDKR) is disordered. Positions 470–490 (NKKRRMMSHHKKADKKRRDKR) are enriched in basic residues.

The protein belongs to the TRAFAC class TrmE-Era-EngA-EngB-Septin-like GTPase superfamily. EngA (Der) GTPase family. As to quaternary structure, associates with the 50S ribosomal subunit.

Its function is as follows. GTPase that plays an essential role in the late steps of ribosome biogenesis. In Pseudomonas syringae pv. syringae (strain B728a), this protein is GTPase Der.